Reading from the N-terminus, the 658-residue chain is Glycogen debranching enzyme (658 aa).

Aspartate 335 acts as the Nucleophile in catalysis. The active-site Proton donor is the glutamate 370. Over residues 457-468 the composition is skewed to basic and acidic residues; it reads NDANGEGNRDGT. The tract at residues 457–478 is disordered; that stretch reads NDANGEGNRDGTDSNFSNNHGT.

This sequence belongs to the glycosyl hydrolase 13 family.

It carries out the reaction Hydrolysis of (1-&gt;6)-alpha-D-glucosidic linkages to branches with degrees of polymerization of three or four glucose residues in limit dextrin.. The protein operates within glycan degradation; glycogen degradation. Removes maltotriose and maltotetraose chains that are attached by 1,6-alpha-linkage to the limit dextrin main chain, generating a debranched limit dextrin. This Pectobacterium carotovorum subsp. carotovorum (strain PC1) protein is Glycogen debranching enzyme.